The primary structure comprises 305 residues: Putative HTH-type transcriptional regulatory protein Saci_1344 (305 aa).

Residues 128–183 (LREKREEKNMSLGELSQRLGVSRISVYDYEKEDSYVSIEVAEKLIEIFGDEVIGDI) enclose the HTH cro/C1-type domain. The segment at residues 139–158 (LGELSQRLGVSRISVYDYEK) is a DNA-binding region (H-T-H motif).

This Sulfolobus acidocaldarius (strain ATCC 33909 / DSM 639 / JCM 8929 / NBRC 15157 / NCIMB 11770) protein is Putative HTH-type transcriptional regulatory protein Saci_1344.